Consider the following 346-residue polypeptide: 4-hydroxy-2-oxovalerate aldolase (346 aa).

The Pyruvate carboxyltransferase domain occupies V8–M260. Residue R16–D17 coordinates substrate. Residue D17 coordinates Mn(2+). H20 serves as the catalytic Proton acceptor. Positions 170 and 199 each coordinate substrate. Residues H199 and H201 each contribute to the Mn(2+) site. A substrate-binding site is contributed by Y290.

This sequence belongs to the 4-hydroxy-2-oxovalerate aldolase family.

It catalyses the reaction (S)-4-hydroxy-2-oxopentanoate = acetaldehyde + pyruvate. This is 4-hydroxy-2-oxovalerate aldolase (nahM) from Stutzerimonas stutzeri (Pseudomonas stutzeri).